Reading from the N-terminus, the 368-residue chain is (Iso)eugenol O-methyltransferase (368 aa).

The propeptide occupies 1 to 2 (MG). S-adenosyl-L-methionine contacts are provided by residues Ser187, 211–212 (GG), Asp234, 254–255 (DM), and Lys268. Catalysis depends on His272, which acts as the Proton acceptor.

This sequence belongs to the class I-like SAM-binding methyltransferase superfamily. Cation-independent O-methyltransferase family. COMT subfamily. In terms of assembly, homodimer. In terms of tissue distribution, expressed in petals, style and stamens, but not in stigma, sepals, leaves or stem tissues.

The enzyme catalyses (E)-isoeugenol + S-adenosyl-L-methionine = (E)-isomethyleugenol + S-adenosyl-L-homocysteine + H(+). Its function is as follows. Catalyzes the methylation of the para-4-hydroxyl of both eugenol and (iso)eugenol to methyleugenol and isomethyleugenol, respectively. The resulting products are part of a complex mixture of low-molecular-weight volatile compounds emitted by the flowers to attract pollinators. The protein is (Iso)eugenol O-methyltransferase (IEMT1) of Clarkia breweri (Fairy fans).